A 595-amino-acid chain; its full sequence is UvrABC system protein C (595 aa).

The GIY-YIG domain occupies 14–91 (DSPGCYIHKD…IQENKPKYNI (78 aa)). The UVR domain occupies 196 to 231 (DKIVNELRDKMTKASELMEFERAAEYRDLIEGIGLL).

Belongs to the UvrC family. As to quaternary structure, interacts with UvrB in an incision complex.

It localises to the cytoplasm. In terms of biological role, the UvrABC repair system catalyzes the recognition and processing of DNA lesions. UvrC both incises the 5' and 3' sides of the lesion. The N-terminal half is responsible for the 3' incision and the C-terminal half is responsible for the 5' incision. This Streptococcus mutans serotype c (strain ATCC 700610 / UA159) protein is UvrABC system protein C.